Reading from the N-terminus, the 226-residue chain is Putative ABC transporter ATP-binding protein DR_2469 (226 aa).

Residues 2-225 (IELRHVSHHY…LRVYRERMTW (224 aa)) form the ABC transporter domain. 33 to 40 (GSNGSGKS) is a binding site for ATP.

This sequence belongs to the ABC transporter superfamily.

The protein resides in the cell membrane. Probably part of an ABC transporter complex. Responsible for energy coupling to the transport system. The protein is Putative ABC transporter ATP-binding protein DR_2469 of Deinococcus radiodurans (strain ATCC 13939 / DSM 20539 / JCM 16871 / CCUG 27074 / LMG 4051 / NBRC 15346 / NCIMB 9279 / VKM B-1422 / R1).